We begin with the raw amino-acid sequence, 216 residues long: 3-keto-L-gulonate-6-phosphate decarboxylase UlaD (216 aa).

D11 contributes to the substrate binding site. Mg(2+)-binding residues include E33 and D62. R192 contacts substrate.

This sequence belongs to the HPS/KGPDC family. KGPDC subfamily. As to quaternary structure, homodimer. The cofactor is Mg(2+).

It carries out the reaction 3-dehydro-L-gulonate 6-phosphate + H(+) = L-xylulose 5-phosphate + CO2. It functions in the pathway cofactor degradation; L-ascorbate degradation; D-xylulose 5-phosphate from L-ascorbate: step 2/4. Functionally, catalyzes the decarboxylation of 3-keto-L-gulonate-6-P into L-xylulose-5-P. Is involved in the anaerobic L-ascorbate utilization. This is 3-keto-L-gulonate-6-phosphate decarboxylase UlaD from Salmonella typhi.